We begin with the raw amino-acid sequence, 1369 residues long: ATP-dependent RNA helicase DHX29 (1369 aa).

Disordered stretches follow at residues 27 to 75 (SAEA…TNDS) and 176 to 226 (SQEF…KNME). Residues Ser-71, Ser-192, and Ser-200 each carry the phosphoserine modification. Positions 189–201 (KFQSPQIQATISP) are enriched in polar residues. Residues 208–226 (KTYEEDPKSKPKKEEKNME) show a composition bias toward basic and acidic residues. 3 coiled-coil regions span residues 222-256 (EKNMEVNMKEWILRYAEQQNEEEKNENSKSLEEEE), 283-310 (LEKNKQGQKEAQEKIRKFQREMETLEDH), and 492-519 (IAKLLNKLKQQQQQQQQHSENKRENSED). The tract at residues 502–526 (QQQQQQQHSENKRENSEDPEESWEN) is disordered. A Helicase ATP-binding domain is found at 582–755 (VETLKRHRVV…FTHCPILRIS (174 aa)). Residue 595–602 (GETGSGKS) participates in ATP binding. A DEAH box motif is present at residues 702 to 705 (DEVH). The region spanning 849-1026 (LILELLAYLD…ELCLHIMKCN (178 aa)) is the Helicase C-terminal domain.

Belongs to the DEAD box helicase family. DEAH subfamily. Part of the 43S pre-initiation complex (PIC) that contains at least Met-tRNA, EIF1, EIF1A (EIF1AX or EIF1AY), EIF2S1, EIF2S2, EIF2S3, EIF3A, EIF3B, EIF3C, EIF3D, EIF3E, EIF3F, EIF3G, EIF3H, EIF3I, EIF3J, EIF3K, EIF3L, EIF3M, DHX29 and the 40S ribosomal subunit.

The protein resides in the cytoplasm. It carries out the reaction ATP + H2O = ADP + phosphate + H(+). Its function is as follows. ATP-binding RNA helicase involved in translation initiation. Part of the 43S pre-initiation complex that is required for efficient initiation on mRNAs of higher eukaryotes with structured 5'-UTRs by promoting efficient NTPase-dependent 48S complex formation. Specifically binds to the 40S ribosome near the mRNA entrance. Does not possess a processive helicase activity. The protein is ATP-dependent RNA helicase DHX29 of Homo sapiens (Human).